Reading from the N-terminus, the 272-residue chain is MNELILNLKGDVSVPVEMDKILPEKIQEMSLEEISGIELIQGNKTAKVSEIFDVELKESDVAKVTINNCCKKVKRIGEKMTSGEIVVNGDAGMYIGVEMKGGKITVNGDAESWVGQNLKGGEIIINGNAENYVGSAYRGDWRGMSGGKITITGNAGSELGEYLKGGTIVIKGNTKIMPGIHQNGGMIIIEGDIEGRAGGEMMKGAIVVYGKILEPLPSFKFEGIVEDPLVKLSKKDAGTQLKGTFIKFSGDYVNTKPKGQLYAAIENNKNLI.

Tandem repeats lie at residues 77-89 (GEKMTSGEIVVNG), 96-108 (GVEMKGGKITVNG), 115-127 (GQNLKGGEIIING), 141-153 (WRGMSGGKITITG), 160-172 (GEYLKGGTIVIKG), 179-191 (GIHQNGGMIIIEG), and 198-210 (GGEMMKGAIVVYG). Residues 77-210 (GEKMTSGEIV…MMKGAIVVYG (134 aa)) are 7 X 13 AA repeats of [GW]-X-X-[MLP]-X-X-G-X-[IL]-X-[IV]-X-G.

The protein belongs to the FwdC/FmdC family. This enzyme is composed of seven subunits fwdA (65 kDa), fwdB (53 kDa), fwdC (31 kDa), fwdD (15 kDa), fwdE, fwdF and fwdG.

It carries out the reaction N-formylmethanofuran + 2 oxidized [2Fe-2S]-[ferredoxin] + H2O = methanofuran + 2 reduced [2Fe-2S]-[ferredoxin] + CO2 + H(+). It functions in the pathway one-carbon metabolism; methanogenesis from CO(2); 5,10-methenyl-5,6,7,8-tetrahydromethanopterin from CO(2): step 1/3. Functionally, catalyzes the reversible oxidation of CO(2) and methanofuran (MFR) to N-formylmethanofuran (CHO-MFR). This enzyme is oxygen-labile. In Methanococcus maripaludis (strain DSM 14266 / JCM 13030 / NBRC 101832 / S2 / LL), this protein is Tungsten-containing formylmethanofuran dehydrogenase 2 subunit C (fwdC).